Consider the following 310-residue polypeptide: Olfactory receptor 8B8 (310 aa).

Topologically, residues 1-27 (MATENASVPEFILAGLTDQPGLRMPLF) are extracellular. N5 is a glycosylation site (N-linked (GlcNAc...) asparagine). Residues 28 to 48 (FLFLGFYMVTMVGNLGLITLI) form a helical membrane-spanning segment. Topologically, residues 49–55 (GLNSHLH) are cytoplasmic. Residues 56–76 (TPMYFFLFNLSLIDFCYSTVI) form a helical membrane-spanning segment. Over 77–98 (TPKMLVSFVSKKNIISYSGCMT) the chain is Extracellular. A disulfide bridge links C96 with C188. A helical transmembrane segment spans residues 99-119 (QLFFFLFFVVSESFILSAMAY). The Cytoplasmic portion of the chain corresponds to 120–140 (DRYVAICNPLMYTVTMSPQVC). Residues 141-161 (LLLLLGVYVMGFAGAMAHTAF) form a helical membrane-spanning segment. At 162–195 (MVKLTFCADKLVNHYMCDILPLLERSCTSTYVNE) the chain is on the extracellular side. Residues 196–216 (LVVFIVVGIDIGVPTVTIFIS) form a helical membrane-spanning segment. The Cytoplasmic segment spans residues 217 to 238 (YALILSSILRISSTEGRSKAFS). The helical transmembrane segment at 239 to 259 (TCSSHIIAVSLFFGSGAFMYL) threads the bilayer. Residues 260–270 (KPSSLLPMNQG) are Extracellular-facing. The helical transmembrane segment at 271-291 (KVSSLFYTIVVPMLNPLIYSL) threads the bilayer. Residues 292–310 (RNKDVKVALRKTLSRSSFS) lie on the Cytoplasmic side of the membrane.

Belongs to the G-protein coupled receptor 1 family.

The protein resides in the cell membrane. Its function is as follows. Odorant receptor. This chain is Olfactory receptor 8B8, found in Mus musculus (Mouse).